A 61-amino-acid chain; its full sequence is Small ribosomal subunit protein uS14 (61 aa).

Zn(2+) contacts are provided by Cys-24, Cys-27, Cys-40, and Cys-43.

Belongs to the universal ribosomal protein uS14 family. Zinc-binding uS14 subfamily. In terms of assembly, part of the 30S ribosomal subunit. Contacts proteins S3 and S10. Requires Zn(2+) as cofactor.

Binds 16S rRNA, required for the assembly of 30S particles and may also be responsible for determining the conformation of the 16S rRNA at the A site. The polypeptide is Small ribosomal subunit protein uS14 (Mycoplasmoides gallisepticum (strain R(low / passage 15 / clone 2)) (Mycoplasma gallisepticum)).